A 67-amino-acid polypeptide reads, in one-letter code: UPF0434 protein Reut_A0592 (67 aa).

It belongs to the UPF0434 family.

The polypeptide is UPF0434 protein Reut_A0592 (Cupriavidus pinatubonensis (strain JMP 134 / LMG 1197) (Cupriavidus necator (strain JMP 134))).